The following is a 120-amino-acid chain: Ribonuclease P protein component (120 aa).

This sequence belongs to the RnpA family. Consists of a catalytic RNA component (M1 or rnpB) and a protein subunit.

It carries out the reaction Endonucleolytic cleavage of RNA, removing 5'-extranucleotides from tRNA precursor.. Functionally, RNaseP catalyzes the removal of the 5'-leader sequence from pre-tRNA to produce the mature 5'-terminus. It can also cleave other RNA substrates such as 4.5S RNA. The protein component plays an auxiliary but essential role in vivo by binding to the 5'-leader sequence and broadening the substrate specificity of the ribozyme. In Bordetella avium (strain 197N), this protein is Ribonuclease P protein component.